The sequence spans 205 residues: Thymidylate kinase (205 aa).

Gly9–Thr16 contacts ATP.

The protein belongs to the thymidylate kinase family.

It carries out the reaction dTMP + ATP = dTDP + ADP. Its function is as follows. Phosphorylation of dTMP to form dTDP in both de novo and salvage pathways of dTTP synthesis. In Staphylococcus aureus (strain NCTC 8325 / PS 47), this protein is Thymidylate kinase.